The sequence spans 290 residues: Cilia- and flagella-associated protein 298 (290 aa).

The residue at position 264 (Tyr264) is a Phosphotyrosine.

The protein belongs to the CFAP298 family. Interacts with ZMYND10.

The protein localises to the cytoplasm. It is found in the cytoskeleton. Its subcellular location is the cilium basal body. Plays a role in motile cilium function, possibly by acting on outer dynein arm assembly. Seems to be important for initiation rather than maintenance of cilium motility. Required for correct positioning of the cilium at the apical cell surface, suggesting an additional role in the planar cell polarity (PCP) pathway. May suppress canonical Wnt signaling activity. The polypeptide is Cilia- and flagella-associated protein 298 (Homo sapiens (Human)).